A 245-amino-acid chain; its full sequence is Protein mlo1 (245 aa).

An SAP domain is found at 4–38; it reads YKSLKVAELREKLAEKGLSTAGNKAELVSRLTAAT. The tract at residues 32 to 245 is disordered; it reads SRLTAATESN…AERFGVAAKN (214 aa). The span at 37 to 52 shows a compositional bias: low complexity; sequence ATESNDENTSNNNATD. The segment covering 58 to 70 has biased composition (acidic residues); that stretch reads PPEDDIDWGDMEN. Residues 109–118 show a composition bias toward polar residues; the sequence is TSQAPETSTG. The span at 119–130 shows a compositional bias: basic and acidic residues; it reads AEEHQETTEESK. A Phosphoserine modification is found at Ser139. Residues 182–196 are compositionally biased toward low complexity; that stretch reads SSNNKNHNQSKNPQN.

This sequence belongs to the SAP domain-containing ribonucleoprotein family.

This is Protein mlo1 (mlo1) from Schizosaccharomyces pombe (strain 972 / ATCC 24843) (Fission yeast).